Reading from the N-terminus, the 698-residue chain is DNA ligase (698 aa).

NAD(+)-binding positions include 35-39 (DSVYD), 84-85 (SL), and Glu123. Lys125 acts as the N6-AMP-lysine intermediate in catalysis. Arg146, Glu183, Lys302, and Lys326 together coordinate NAD(+). Zn(2+)-binding residues include Cys420, Cys423, Cys438, and Cys443. The region spanning 612–698 (NGKGHLNGQT…QNSADTIHLL (87 aa)) is the BRCT domain.

It belongs to the NAD-dependent DNA ligase family. LigA subfamily. Mg(2+) is required as a cofactor. The cofactor is Mn(2+).

The enzyme catalyses NAD(+) + (deoxyribonucleotide)n-3'-hydroxyl + 5'-phospho-(deoxyribonucleotide)m = (deoxyribonucleotide)n+m + AMP + beta-nicotinamide D-nucleotide.. In terms of biological role, DNA ligase that catalyzes the formation of phosphodiester linkages between 5'-phosphoryl and 3'-hydroxyl groups in double-stranded DNA using NAD as a coenzyme and as the energy source for the reaction. It is essential for DNA replication and repair of damaged DNA. In Synechococcus sp. (strain WH7803), this protein is DNA ligase.